The following is a 600-amino-acid chain: Elongation factor 4 (600 aa).

One can recognise a tr-type G domain in the interval 13–194 (DRIRNFCIIA…AIVERIPPPR (182 aa)). Residues 25-30 (DHGKST) and 141-144 (NKID) contribute to the GTP site.

The protein belongs to the TRAFAC class translation factor GTPase superfamily. Classic translation factor GTPase family. LepA subfamily.

Its subcellular location is the cell membrane. The catalysed reaction is GTP + H2O = GDP + phosphate + H(+). Required for accurate and efficient protein synthesis under certain stress conditions. May act as a fidelity factor of the translation reaction, by catalyzing a one-codon backward translocation of tRNAs on improperly translocated ribosomes. Back-translocation proceeds from a post-translocation (POST) complex to a pre-translocation (PRE) complex, thus giving elongation factor G a second chance to translocate the tRNAs correctly. Binds to ribosomes in a GTP-dependent manner. The polypeptide is Elongation factor 4 (Rubrobacter xylanophilus (strain DSM 9941 / JCM 11954 / NBRC 16129 / PRD-1)).